The sequence spans 223 residues: ATP phosphoribosyltransferase (223 aa).

This sequence belongs to the ATP phosphoribosyltransferase family. Short subfamily. In terms of assembly, heteromultimer composed of HisG and HisZ subunits.

It is found in the cytoplasm. The enzyme catalyses 1-(5-phospho-beta-D-ribosyl)-ATP + diphosphate = 5-phospho-alpha-D-ribose 1-diphosphate + ATP. It functions in the pathway amino-acid biosynthesis; L-histidine biosynthesis; L-histidine from 5-phospho-alpha-D-ribose 1-diphosphate: step 1/9. Functionally, catalyzes the condensation of ATP and 5-phosphoribose 1-diphosphate to form N'-(5'-phosphoribosyl)-ATP (PR-ATP). Has a crucial role in the pathway because the rate of histidine biosynthesis seems to be controlled primarily by regulation of HisG enzymatic activity. This chain is ATP phosphoribosyltransferase, found in Bordetella bronchiseptica (strain ATCC BAA-588 / NCTC 13252 / RB50) (Alcaligenes bronchisepticus).